We begin with the raw amino-acid sequence, 150 residues long: Transcriptional regulator MraZ (150 aa).

2 consecutive SpoVT-AbrB domains span residues 8 to 55 (FINN…GISH) and 84 to 127 (AVQL…QPQN).

This sequence belongs to the MraZ family. As to quaternary structure, forms oligomers.

The protein localises to the cytoplasm. Its subcellular location is the nucleoid. The chain is Transcriptional regulator MraZ from Rickettsia bellii (strain OSU 85-389).